The primary structure comprises 586 residues: Scavenger receptor cysteine-rich domain-containing group B protein (586 aa).

The tract at residues 1–33 (MGPSERPSIGWTPKEAEMQIGPQPDGWSRGWKP) is disordered. The N-terminal stretch at 1 to 58 (MGPSERPSIGWTPKEAEMQIGPQPDGWSRGWKPGDRGAVPLPLSPALSFLLLFPLASA) is a signal peptide. 4 consecutive SRCR domains span residues 69–169 (LRLV…VLCD), 200–300 (VRLV…VLCA), 355–455 (LRLV…ALCA), and 484–584 (LRLA…VLCQ). Disulfide bonds link cysteine 94/cysteine 158, cysteine 107/cysteine 168, cysteine 138/cysteine 148, cysteine 225/cysteine 289, cysteine 238/cysteine 299, cysteine 269/cysteine 279, cysteine 380/cysteine 444, cysteine 393/cysteine 454, cysteine 424/cysteine 434, cysteine 509/cysteine 573, cysteine 522/cysteine 583, and cysteine 553/cysteine 563.

Its subcellular location is the secreted. The chain is Scavenger receptor cysteine-rich domain-containing group B protein from Mus musculus (Mouse).